A 109-amino-acid polypeptide reads, in one-letter code: Iron-sulfur assembly protein IscA-like 3, mitochondrial (109 aa).

The transit peptide at 1-18 directs the protein to the mitochondrion; that stretch reads MRKQVLALSDTAAARIRQ. Residues Cys-37, Cys-100, and Cys-102 each coordinate Fe cation.

It belongs to the HesB/IscA family. In terms of assembly, homodimer; may form tetramers and higher multimers. Fe cation is required as a cofactor.

Its subcellular location is the mitochondrion. Functionally, involved in the assembly of mitochondrial iron-sulfur proteins. Probably involved in the binding of an intermediate of Fe/S cluster assembly. The protein is Iron-sulfur assembly protein IscA-like 3, mitochondrial of Arabidopsis thaliana (Mouse-ear cress).